A 1320-amino-acid chain; its full sequence is Sister chromatid cohesion protein PDS5 homolog A (1320 aa).

5 HEAT repeats span residues 156–195 (NEIFIQLFKTLFSVINNSHNQKVQMHMLDLMSSIIMEGDG), 272–310 (PLLLVSVMPQLEFKLKSNDGEERLAVVKLLAKLFGAKDS), 388–426 (NLVNDQLLGFVRERMLDKRWRVRKEAMMGLAQLFKKYCL), 709–747 (PQIRSTLIPILHQKAKRGTPHQAKQAVHCIHAIFHNKEV), and 990–1028 (SLLPEYVVPYMIHLLAHDPDLTKPQDLEQLRDVKECLWF). Residues 1158 to 1179 (TFTSETGSNASTNSQPSSPATN) show a composition bias toward polar residues. A disordered region spans residues 1158–1320 (TFTSETGSNA…APQRQIDLQR (163 aa)). The span at 1180–1194 (KSRDVSSEVGARENE) shows a compositional bias: basic and acidic residues. The span at 1225-1241 (GTENSVSSNPSAGSQPP) shows a compositional bias: polar residues. Residues 1255–1267 (AGAATQEKEAGAT) are compositionally biased toward low complexity. The span at 1283-1293 (QDPSSTASTDA) shows a compositional bias: polar residues. Over residues 1294–1309 (LSDKTPKQQKEAEPKR) the composition is skewed to basic and acidic residues.

This sequence belongs to the PDS5 family. In terms of assembly, interacts with the cohesin complex. Binds chromatin in a cohesin-dependent manner.

It localises to the nucleus. In terms of biological role, may regulate sister chromatid cohesion during mitosis and couple it to DNA replication. The sequence is that of Sister chromatid cohesion protein PDS5 homolog A from Danio rerio (Zebrafish).